Reading from the N-terminus, the 1909-residue chain is Plexin-B3 (1909 aa).

Residues 1–44 (MCHAAQETPLLHHFMAPVMARWPPFGLCLLLLLLSPPPLPLTGA) form the signal peptide. Positions 45-471 (HRFSAPNTTL…TAHQVDRIPV (427 aa)) constitute a Sema domain. Residues 45 to 1255 (HRFSAPNTTL…PLSAFPVEAQ (1211 aa)) lie on the Extracellular side of the membrane. The N-linked (GlcNAc...) asparagine glycan is linked to Asn-51. 2 disulfide bridges follow: Cys-98–Cys-107 and Cys-132–Cys-140. Asn-231 carries N-linked (GlcNAc...) asparagine glycosylation. 8 disulfides stabilise this stretch: Cys-267-Cys-370, Cys-283-Cys-315, Cys-333-Cys-357, Cys-474-Cys-491, Cys-480-Cys-525, Cys-483-Cys-500, Cys-494-Cys-506, and Cys-562-Cys-580. Residues 473-526 (ACPQFPDCASCLQAQDPLCGWCVLQGRCTRKGQCGRAGQLNQWLWSYEEDSHCL) form the PSI 1 domain. N-linked (GlcNAc...) asparagine glycosylation occurs at Asn-615. PSI domains follow at residues 620 to 682 (DCSA…GACP) and 787 to 833 (DCAM…LLCP). N-linked (GlcNAc...) asparagine glycans are attached at residues Asn-802, Asn-900, Asn-957, Asn-1101, and Asn-1218. IPT/TIG domains lie at 835 to 925 (PSID…FTYQ), 927 to 1012 (PVLL…FRYT), 1015 to 1145 (PQLV…FLYQ), and 1159 to 1244 (ARPY…YEAE). The helical transmembrane segment at 1256 to 1276 (AGVGMGAAVLIAAVLLLTLMY) threads the bilayer. At 1277-1909 (RHKSKQALRD…ALVENKVTDL (633 aa)) the chain is on the cytoplasmic side.

It belongs to the plexin family. As to quaternary structure, interacts (via cytoplasmic domain) with RAC1 and ARHGDIA. Binds MET and MST1R. Interacts (via cytoplasmic domain) with FSCN1. Interacts with RIT2/RIN. May form homodimers (via Sema domain). As to expression, expression detected in Purkinje and granular cells in cerebellum, and in brain neocortex but not in corpus callosum. Expressed in glioma cells and embryonic kidney cells (at protein level). Expressed in brain, liver, pancreas and placenta, with weak expression detected also in lung and kidney. Expressed in several glioma cell lines.

It localises to the cell membrane. Functionally, receptor for SEMA5A that plays a role in axon guidance, invasive growth and cell migration. Stimulates neurite outgrowth and mediates Ca(2+)/Mg(2+)-dependent cell aggregation. In glioma cells, SEMA5A stimulation of PLXNB3 results in the disassembly of F-actin stress fibers, disruption of focal adhesions and cellular collapse as well as inhibition of cell migration and invasion through ARHGDIA-mediated inactivation of RAC1. This Homo sapiens (Human) protein is Plexin-B3 (PLXNB3).